We begin with the raw amino-acid sequence, 440 residues long: Nitrilase and fragile histidine triad fusion protein NitFhit (440 aa).

In terms of domain architecture, CN hydrolase spans arginine 14–leucine 264. Catalysis depends on residues glutamate 54, lysine 127, and cysteine 169. The region spanning glycine 297–aspartate 405 is the HIT domain. The Histidine triad motif signature appears at histidine 390 to histidine 394. The active-site Tele-AMP-histidine intermediate is the histidine 392.

It in the N-terminal section; belongs to the UPF0012 family. Homotetramer. Mn(2+) serves as cofactor.

The enzyme catalyses P(1),P(3)-bis(5'-adenosyl) triphosphate + H2O = AMP + ADP + 2 H(+). Its function is as follows. Cleaves A-5'-PPP-5'A to yield AMP and ADP. This is Nitrilase and fragile histidine triad fusion protein NitFhit from Caenorhabditis elegans.